Consider the following 475-residue polypeptide: Ribulose bisphosphate carboxylase large chain (475 aa).

Positions 1–2 (MS) are excised as a propeptide. The residue at position 3 (proline 3) is an N-acetylproline. N6,N6,N6-trimethyllysine is present on lysine 14. Positions 123 and 173 each coordinate substrate. Lysine 175 serves as the catalytic Proton acceptor. Lysine 177 contributes to the substrate binding site. Mg(2+) is bound by residues lysine 201, aspartate 203, and glutamate 204. Position 201 is an N6-carboxylysine (lysine 201). The Proton acceptor role is filled by histidine 294. Substrate contacts are provided by arginine 295, histidine 327, and serine 379.

The protein belongs to the RuBisCO large chain family. Type I subfamily. In terms of assembly, heterohexadecamer of 8 large chains and 8 small chains; disulfide-linked. The disulfide link is formed within the large subunit homodimers. Requires Mg(2+) as cofactor. The disulfide bond which can form in the large chain dimeric partners within the hexadecamer appears to be associated with oxidative stress and protein turnover.

The protein localises to the plastid. It localises to the chloroplast. It carries out the reaction 2 (2R)-3-phosphoglycerate + 2 H(+) = D-ribulose 1,5-bisphosphate + CO2 + H2O. It catalyses the reaction D-ribulose 1,5-bisphosphate + O2 = 2-phosphoglycolate + (2R)-3-phosphoglycerate + 2 H(+). In terms of biological role, ruBisCO catalyzes two reactions: the carboxylation of D-ribulose 1,5-bisphosphate, the primary event in carbon dioxide fixation, as well as the oxidative fragmentation of the pentose substrate in the photorespiration process. Both reactions occur simultaneously and in competition at the same active site. The sequence is that of Ribulose bisphosphate carboxylase large chain from Citrus sinensis (Sweet orange).